We begin with the raw amino-acid sequence, 426 residues long: Nucleolar protein 12 (426 aa).

Residues 26–128 (QSSGPVDTLE…SKRASRPDMK (103 aa)) form a disordered region. The segment covering 87–105 (LEEKYMQQVLKEDSDHESE) has biased composition (basic and acidic residues). 2 RRM domains span residues 137 to 251 (RTVF…SVAH) and 259 to 339 (RSVF…RCRN). A compositionally biased stretch (basic residues) spans 401–415 (KARSKTGRVTKRSQA). The segment at 401-426 (KARSKTGRVTKRSQAFKKAEANKKQK) is disordered. The segment covering 417–426 (KKAEANKKQK) has biased composition (basic and acidic residues).

The protein belongs to the RRM RBM34 family.

The protein resides in the nucleus. It localises to the nucleolus. Involved in pre-25S rRNA processing. This Eremothecium gossypii (strain ATCC 10895 / CBS 109.51 / FGSC 9923 / NRRL Y-1056) (Yeast) protein is Nucleolar protein 12 (NOP12).